Here is a 393-residue protein sequence, read N- to C-terminus: Probable hydrolase sll0100 (393 aa).

Belongs to the peptidase M20 family.

This chain is Probable hydrolase sll0100, found in Synechocystis sp. (strain ATCC 27184 / PCC 6803 / Kazusa).